Consider the following 589-residue polypeptide: Peroxisomal biogenesis factor 8 (589 aa).

Positions Ser-587 to Leu-589 match the Microbody targeting signal motif.

The protein localises to the peroxisome matrix. In terms of biological role, required for peroxisome assembly. The polypeptide is Peroxisomal biogenesis factor 8 (PEX8) (Saccharomyces cerevisiae (strain ATCC 204508 / S288c) (Baker's yeast)).